A 180-amino-acid chain; its full sequence is Adenine phosphoribosyltransferase (180 aa).

A2 carries the N-acetylalanine modification. A phosphoserine mark is found at S4, S15, and S30. Y60 bears the Phosphotyrosine mark. S66 is subject to Phosphoserine. Position 114 is an N6-acetyllysine (K114). T135 bears the Phosphothreonine mark.

It belongs to the purine/pyrimidine phosphoribosyltransferase family. Homodimer.

The protein resides in the cytoplasm. The enzyme catalyses AMP + diphosphate = 5-phospho-alpha-D-ribose 1-diphosphate + adenine. The protein operates within purine metabolism; AMP biosynthesis via salvage pathway; AMP from adenine: step 1/1. Its function is as follows. Catalyzes a salvage reaction resulting in the formation of AMP, that is energically less costly than de novo synthesis. In Homo sapiens (Human), this protein is Adenine phosphoribosyltransferase.